The sequence spans 355 residues: uncharacterized protein (355 aa).

It belongs to the carbohydrate kinase PfkB family.

This is an uncharacterized protein from Dictyostelium discoideum (Social amoeba).